The chain runs to 188 residues: MKISANSIRTGNILVYNNDLWVVSKTPEHTQPGKGGAYVQVEMKNLKTGTKRNARFSSSDYLEKAELEQKDYQFLYFEGDDLVLMDTKHFDQINIPKEMLEEKLSFLTENMIVKVEFYNDKPLNIELLPTVILEISETDPVIKGATATASYKPAILENGIKVKVPQYLEIGEKIVVKTDDMTYVERAK.

Belongs to the elongation factor P family.

Its subcellular location is the cytoplasm. The protein operates within protein biosynthesis; polypeptide chain elongation. Functionally, involved in peptide bond synthesis. Stimulates efficient translation and peptide-bond synthesis on native or reconstituted 70S ribosomes in vitro. Probably functions indirectly by altering the affinity of the ribosome for aminoacyl-tRNA, thus increasing their reactivity as acceptors for peptidyl transferase. The chain is Elongation factor P from Rickettsia massiliae (strain Mtu5).